The following is a 337-amino-acid chain: MKKVAVLGAGSWGSVLANLLVENGHQVMLWSRNQAQVDQLNQEHKNPHYMKDFTYNEGLVATSDMQAAVSGAAVILMVIPTKGVRQVAGQLAELLNGVTPAPLLVHATKGLEQNTYKRVSEMLAEEIPAASRRGIVVLSGPSHAEDVAIKDVTAVTAACGDLACAKEIQELFSNHYFRVYTNDDVIGAEFGAALKNIIALGSGALSGLGYHDNARAALITRGLAEIRRLGVAFGADPMTFIGLSGVGDLVVTATSKNSRNWRAGYQLGQGQKLADVVENMGMVIEGVATTKAAYELAQKRHVQMPITAALYRVLYEDEDIKSAIDGLMEREVTSEKE.

4 residues coordinate NADPH: Ser-11, Trp-12, Arg-32, and Lys-109. Residues Lys-109, Gly-140, and Ser-142 each coordinate sn-glycerol 3-phosphate. Residue Ala-144 participates in NADPH binding. Sn-glycerol 3-phosphate-binding residues include Lys-195, Asp-248, Ser-258, Arg-259, and Asn-260. Lys-195 serves as the catalytic Proton acceptor. An NADPH-binding site is contributed by Arg-259. 2 residues coordinate NADPH: Val-283 and Glu-285.

It belongs to the NAD-dependent glycerol-3-phosphate dehydrogenase family.

It is found in the cytoplasm. The catalysed reaction is sn-glycerol 3-phosphate + NAD(+) = dihydroxyacetone phosphate + NADH + H(+). It carries out the reaction sn-glycerol 3-phosphate + NADP(+) = dihydroxyacetone phosphate + NADPH + H(+). Its pathway is membrane lipid metabolism; glycerophospholipid metabolism. In terms of biological role, catalyzes the reduction of the glycolytic intermediate dihydroxyacetone phosphate (DHAP) to sn-glycerol 3-phosphate (G3P), the key precursor for phospholipid synthesis. This chain is Glycerol-3-phosphate dehydrogenase [NAD(P)+], found in Limosilactobacillus fermentum (strain NBRC 3956 / LMG 18251) (Lactobacillus fermentum).